Here is a 400-residue protein sequence, read N- to C-terminus: Nicotinate phosphoribosyltransferase (400 aa).

Residue histidine 220 is modified to Phosphohistidine; by autocatalysis.

Belongs to the NAPRTase family. Post-translationally, transiently phosphorylated on a His residue during the reaction cycle. Phosphorylation strongly increases the affinity for substrates and increases the rate of nicotinate D-ribonucleotide production. Dephosphorylation regenerates the low-affinity form of the enzyme, leading to product release.

The catalysed reaction is nicotinate + 5-phospho-alpha-D-ribose 1-diphosphate + ATP + H2O = nicotinate beta-D-ribonucleotide + ADP + phosphate + diphosphate. Its pathway is cofactor biosynthesis; NAD(+) biosynthesis; nicotinate D-ribonucleotide from nicotinate: step 1/1. Catalyzes the synthesis of beta-nicotinate D-ribonucleotide from nicotinate and 5-phospho-D-ribose 1-phosphate at the expense of ATP. This is Nicotinate phosphoribosyltransferase from Escherichia coli O7:K1 (strain IAI39 / ExPEC).